We begin with the raw amino-acid sequence, 557 residues long: UvrABC system protein C (557 aa).

The 76-residue stretch at 14 to 89 (EEPGVYIFKN…IKKYRPKYNV (76 aa)) folds into the GIY-YIG domain. A UVR domain is found at 194–229 (EEVFDYLKEKMETHSKMLDFENAAKYRDLLLNLSNV).

The protein belongs to the UvrC family. As to quaternary structure, interacts with UvrB in an incision complex.

It is found in the cytoplasm. In terms of biological role, the UvrABC repair system catalyzes the recognition and processing of DNA lesions. UvrC both incises the 5' and 3' sides of the lesion. The N-terminal half is responsible for the 3' incision and the C-terminal half is responsible for the 5' incision. This Thermotoga sp. (strain RQ2) protein is UvrABC system protein C.